The chain runs to 136 residues: Protein NrdI (136 aa).

The protein belongs to the NrdI family.

Probably involved in ribonucleotide reductase function. This chain is Protein NrdI, found in Salmonella typhi.